The primary structure comprises 354 residues: Peptide chain release factor 1 (354 aa).

Q230 is modified (N5-methylglutamine).

It belongs to the prokaryotic/mitochondrial release factor family. In terms of processing, methylated by PrmC. Methylation increases the termination efficiency of RF1.

The protein resides in the cytoplasm. Its function is as follows. Peptide chain release factor 1 directs the termination of translation in response to the peptide chain termination codons UAG and UAA. In Novosphingobium aromaticivorans (strain ATCC 700278 / DSM 12444 / CCUG 56034 / CIP 105152 / NBRC 16084 / F199), this protein is Peptide chain release factor 1.